The chain runs to 332 residues: Probable ABC transporter permease protein YphD (332 aa).

The next 10 membrane-spanning stretches (helical) occupy residues 28–48, 63–83, 84–104, 105–125, 131–151, 172–192, 222–242, 251–271, 278–298, and 303–323; these read GLLV…PGFI, IGIA…DVSV, GPMV…EVPL, AVAC…AGVL, VPSF…GLFM, FLGV…FVFI, VRIL…ILLA, GAAN…GTAL, LFGT…LVLL, and FFQQ…NILL.

Belongs to the binding-protein-dependent transport system permease family. AraH/RbsC subfamily.

The protein localises to the cell inner membrane. Probably part of the binding-protein-dependent transport system YphDEF. Probably responsible for the translocation of the substrate across the membrane. In Escherichia coli (strain K12), this protein is Probable ABC transporter permease protein YphD (yphD).